Here is a 429-residue protein sequence, read N- to C-terminus: Ribosomal RNA small subunit methyltransferase B (429 aa).

S-adenosyl-L-methionine-binding positions include 254 to 260, Asp277, Asp303, and Asp322; that span reads CAAPGGK. The active-site Nucleophile is the Cys375.

It belongs to the class I-like SAM-binding methyltransferase superfamily. RsmB/NOP family.

Its subcellular location is the cytoplasm. It catalyses the reaction cytidine(967) in 16S rRNA + S-adenosyl-L-methionine = 5-methylcytidine(967) in 16S rRNA + S-adenosyl-L-homocysteine + H(+). Its function is as follows. Specifically methylates the cytosine at position 967 (m5C967) of 16S rRNA. This chain is Ribosomal RNA small subunit methyltransferase B, found in Salmonella arizonae (strain ATCC BAA-731 / CDC346-86 / RSK2980).